The sequence spans 413 residues: 1-deoxy-D-xylulose 5-phosphate reductoisomerase (413 aa).

T13, G14, S15, I16, R40, N41, and N127 together coordinate NADPH. K128 provides a ligand contact to 1-deoxy-D-xylulose 5-phosphate. E129 is a binding site for NADPH. D153 is a binding site for Mn(2+). S154, E155, S184, and H207 together coordinate 1-deoxy-D-xylulose 5-phosphate. E155 contributes to the Mn(2+) binding site. G213 is a binding site for NADPH. Residues S220, N225, K226, and E229 each contribute to the 1-deoxy-D-xylulose 5-phosphate site. A Mn(2+)-binding site is contributed by E229.

It belongs to the DXR family. Requires Mg(2+) as cofactor. It depends on Mn(2+) as a cofactor.

The catalysed reaction is 2-C-methyl-D-erythritol 4-phosphate + NADP(+) = 1-deoxy-D-xylulose 5-phosphate + NADPH + H(+). It functions in the pathway isoprenoid biosynthesis; isopentenyl diphosphate biosynthesis via DXP pathway; isopentenyl diphosphate from 1-deoxy-D-xylulose 5-phosphate: step 1/6. Functionally, catalyzes the NADPH-dependent rearrangement and reduction of 1-deoxy-D-xylulose-5-phosphate (DXP) to 2-C-methyl-D-erythritol 4-phosphate (MEP). This is 1-deoxy-D-xylulose 5-phosphate reductoisomerase from Nitrosomonas europaea (strain ATCC 19718 / CIP 103999 / KCTC 2705 / NBRC 14298).